A 144-amino-acid polypeptide reads, in one-letter code: Granulocyte-macrophage colony-stimulating factor (144 aa).

The first 17 residues, 1 to 17 (MWLQNLLLLGTVVCSFS), serve as a signal peptide directing secretion. Residue serine 24 is glycosylated (O-linked (GalNAc...) serine). O-linked (GalNAc...) threonine glycosylation occurs at threonine 27. Residues asparagine 44 and asparagine 54 are each glycosylated (N-linked (GlcNAc...) asparagine). 2 disulfide bridges follow: cysteine 71/cysteine 113 and cysteine 105/cysteine 138.

Belongs to the GM-CSF family. As to quaternary structure, monomer. The signaling GM-CSF receptor complex is a dodecamer of two head-to-head hexamers of two alpha, two beta, and two ligand subunits.

The protein localises to the secreted. Functionally, cytokine that stimulates the growth and differentiation of hematopoietic precursor cells from various lineages, including granulocytes, macrophages, eosinophils and erythrocytes. The sequence is that of Granulocyte-macrophage colony-stimulating factor (CSF2) from Cervus elaphus (Red deer).